Reading from the N-terminus, the 697-residue chain is Envelope glycoprotein G (697 aa).

The first 22 residues, 1–22 (MHAIAPRLLLLFVLSGLPGTRG), serve as a signal peptide directing secretion. Residues 23 to 648 (GSGVPGPINP…WFLTASPALD (626 aa)) are Virion surface-facing. N-linked (GlcNAc...) asparagine; by host glycans are attached at residues N104 and N163. 2 disordered regions span residues 298–389 (HWAP…TTPP) and 402–630 (TPEE…PSGP). Residues 322–335 (LRTDPEGVDPDVRA) are compositionally biased toward basic and acidic residues. 2 stretches are compositionally biased toward low complexity: residues 375–389 (DPSAEPTAPATTTPP) and 402–445 (TPEE…AKTP). An N-linked (GlcNAc...) asparagine; by host glycan is attached at N435. 2 stretches are compositionally biased toward pro residues: residues 446–457 (PTTPAPTTPPPT) and 465–480 (PTTPGPQTTPPGPATP). Residues 481-529 (GPVGASAAPTADSPLTALPPATAPGPSAANVSVAATTATPGTRGTARTP) show a composition bias toward low complexity. N-linked (GlcNAc...) asparagine; by host glycosylation is present at N510. Residues 542-552 (DAPPGSPAPPP) are compositionally biased toward pro residues. Positions 560-576 (EEFEGAGDGEPPEDDDS) are enriched in acidic residues. The segment covering 587–603 (PNKPPPARPGPIRPTLP) has biased composition (pro residues). Residues 649–669 (ILFIISTTIHTAAFVCLVALA) traverse the membrane as a helical segment. Residues 670 to 697 (AQLWRGRAGRRRYAHPSVRYVCLPPERD) lie on the Intravirion side of the membrane.

The protein belongs to the alphaherpesvirinae glycoprotein G family.

Its subcellular location is the virion membrane. Its function is as follows. Chemokine-binding protein that inhibits neutrophils' chemotaxis. The polypeptide is Envelope glycoprotein G (gG) (Homo sapiens (Human)).